Reading from the N-terminus, the 397-residue chain is Succinate--CoA ligase [ADP-forming] subunit beta (397 aa).

Positions 9-254 (KALLAQYGAP…ETEEDPKELA (246 aa)) constitute an ATP-grasp domain. Residues lysine 46, 53 to 55 (GRG), glutamate 109, serine 112, and glutamate 117 each bind ATP. Residues asparagine 209 and aspartate 223 each coordinate Mg(2+). Substrate is bound by residues asparagine 274 and 331–333 (GIM).

Belongs to the succinate/malate CoA ligase beta subunit family. As to quaternary structure, heterotetramer of two alpha and two beta subunits. Mg(2+) serves as cofactor.

The catalysed reaction is succinate + ATP + CoA = succinyl-CoA + ADP + phosphate. It catalyses the reaction GTP + succinate + CoA = succinyl-CoA + GDP + phosphate. It functions in the pathway carbohydrate metabolism; tricarboxylic acid cycle; succinate from succinyl-CoA (ligase route): step 1/1. Succinyl-CoA synthetase functions in the citric acid cycle (TCA), coupling the hydrolysis of succinyl-CoA to the synthesis of either ATP or GTP and thus represents the only step of substrate-level phosphorylation in the TCA. The beta subunit provides nucleotide specificity of the enzyme and binds the substrate succinate, while the binding sites for coenzyme A and phosphate are found in the alpha subunit. The polypeptide is Succinate--CoA ligase [ADP-forming] subunit beta (Jannaschia sp. (strain CCS1)).